The primary structure comprises 402 residues: Argininosuccinate synthase (402 aa).

ATP is bound by residues 10–18 and Ala-37; that span reads AYSGGLDTS. L-citrulline contacts are provided by Tyr-88 and Ser-93. ATP is bound at residue Gly-118. 3 residues coordinate L-aspartate: Thr-120, Asn-124, and Asp-125. Asn-124 is an L-citrulline binding site. L-citrulline-binding residues include Arg-128, Ser-179, Ser-188, Glu-264, and Tyr-276.

This sequence belongs to the argininosuccinate synthase family. Type 1 subfamily. As to quaternary structure, homotetramer.

The protein resides in the cytoplasm. The enzyme catalyses L-citrulline + L-aspartate + ATP = 2-(N(omega)-L-arginino)succinate + AMP + diphosphate + H(+). Its pathway is amino-acid biosynthesis; L-arginine biosynthesis; L-arginine from L-ornithine and carbamoyl phosphate: step 2/3. This is Argininosuccinate synthase from Alkalilimnicola ehrlichii (strain ATCC BAA-1101 / DSM 17681 / MLHE-1).